A 734-amino-acid chain; its full sequence is Photosystem I P700 chlorophyll a apoprotein A2 (734 aa).

8 helical membrane-spanning segments follow: residues 46-69, 135-158, 175-199, 273-291, 330-353, 369-395, 417-439, and 517-535; these read IFAS…FHVA, LYTG…LHLQ, LNHH…HVAI, IAHH…GHMY, IHFQ…QHMY, AALY…IFFI, AIIS…LYVH, and FLVH…LILV. [4Fe-4S] cluster contacts are provided by C559 and C568. Helical transmembrane passes span 575–596 and 643–665; these read AFYL…YWHW and LSVW…MFLI. Chlorophyll a is bound by residues H654, M662, and Y670. Residue W671 participates in phylloquinone binding. The chain crosses the membrane as a helical span at residues 707-727; the sequence is LVGLAHFSVGYIFTYAAFLIA.

Belongs to the PsaA/PsaB family. The PsaA/B heterodimer binds the P700 chlorophyll special pair and subsequent electron acceptors. PSI consists of a core antenna complex that captures photons, and an electron transfer chain that converts photonic excitation into a charge separation. The eukaryotic PSI reaction center is composed of at least 11 subunits. Requires P700 is a chlorophyll a/chlorophyll a' dimer, A0 is one or more chlorophyll a, A1 is one or both phylloquinones and FX is a shared 4Fe-4S iron-sulfur center. as cofactor.

The protein localises to the plastid. The protein resides in the chloroplast thylakoid membrane. The enzyme catalyses reduced [plastocyanin] + hnu + oxidized [2Fe-2S]-[ferredoxin] = oxidized [plastocyanin] + reduced [2Fe-2S]-[ferredoxin]. Its function is as follows. PsaA and PsaB bind P700, the primary electron donor of photosystem I (PSI), as well as the electron acceptors A0, A1 and FX. PSI is a plastocyanin-ferredoxin oxidoreductase, converting photonic excitation into a charge separation, which transfers an electron from the donor P700 chlorophyll pair to the spectroscopically characterized acceptors A0, A1, FX, FA and FB in turn. Oxidized P700 is reduced on the lumenal side of the thylakoid membrane by plastocyanin. The polypeptide is Photosystem I P700 chlorophyll a apoprotein A2 (Aethionema cordifolium (Lebanon stonecress)).